The sequence spans 508 residues: 2'-5'-oligoadenylate synthase-like protein 2 (508 aa).

Residue serine 69 participates in ATP binding. 3 residues coordinate Mg(2+): aspartate 81, aspartate 83, and aspartate 154. ATP-binding residues include arginine 213 and lysine 216. Residues 435–473 form the Ubiquitin-like domain; it reads ILVFVKYPGGQSKPFTIDPDDTILDLKEKIEDAGGPCAE.

The protein belongs to the 2-5A synthase family. The cofactor is Mg(2+). In terms of tissue distribution, strongly expressed in spleen dendritic cells, whereas, in bone marrow-derived dendritic cells, the amount increases during the maturation process. Expressed in many organs, the highest levels being in thymus, lung, and bone marrow.

The enzyme catalyses 3 ATP = 5'-triphosphoadenylyl-(2'-&gt;5')-adenylyl-(2'-&gt;5')-adenosine + 2 diphosphate. With respect to regulation, produced as a latent enzyme which is activated by dsRNA generated during the course of viral infection. The dsRNA activator must be at least 15 nucleotides long, and no modification of the 2'-hydroxyl group is tolerated. ssRNA or dsDNA do not act as activators. In terms of biological role, interferon-induced, dsRNA-activated antiviral enzyme which plays a critical role in cellular innate antiviral response. Synthesizes oligomers of 2'-5'-oligoadenylates (2-5A) from ATP which then bind to the inactive monomeric form of ribonuclease L (RNase L) leading to its dimerization and subsequent activation. Activation of RNase L leads to degradation of cellular as well as viral RNA, resulting in the inhibition of protein synthesis, thus terminating viral replication. Can mediate the antiviral effect via the classical RNase L-dependent pathway or an alternative antiviral pathway independent of RNase L. In Mus musculus (Mouse), this protein is 2'-5'-oligoadenylate synthase-like protein 2 (Oasl2).